The sequence spans 675 residues: UvrABC system protein B (675 aa).

Residues 32–417 form the Helicase ATP-binding domain; it reads EGLSDGLAYQ…EHAGQVVEQV (386 aa). 45 to 52 contributes to the ATP binding site; the sequence is GVTGSGKT. The Beta-hairpin motif lies at 98-121; it reads YYDYYQPEAYVPSRDLFIEKDSAI. Positions 436-602 constitute a Helicase C-terminal domain; the sequence is QVDDLMSEIN…QIKKQVKDII (167 aa). One can recognise a UVR domain in the interval 634 to 669; sequence IKEIAKLEKAMQQAARDLQFEEAAVLRDRIRNIKEN.

It belongs to the UvrB family. Forms a heterotetramer with UvrA during the search for lesions. Interacts with UvrC in an incision complex.

The protein localises to the cytoplasm. The UvrABC repair system catalyzes the recognition and processing of DNA lesions. A damage recognition complex composed of 2 UvrA and 2 UvrB subunits scans DNA for abnormalities. Upon binding of the UvrA(2)B(2) complex to a putative damaged site, the DNA wraps around one UvrB monomer. DNA wrap is dependent on ATP binding by UvrB and probably causes local melting of the DNA helix, facilitating insertion of UvrB beta-hairpin between the DNA strands. Then UvrB probes one DNA strand for the presence of a lesion. If a lesion is found the UvrA subunits dissociate and the UvrB-DNA preincision complex is formed. This complex is subsequently bound by UvrC and the second UvrB is released. If no lesion is found, the DNA wraps around the other UvrB subunit that will check the other stand for damage. This chain is UvrABC system protein B, found in Neisseria gonorrhoeae.